A 595-amino-acid polypeptide reads, in one-letter code: MKNLLKRYVSIKNIIKVIELDFFANLKLRYYKLAMKLFKIEDEKFDEILLKAGMNAVSSTYLPVVFLTSIILGLIIFIIFLIVFNIFYAIFGLIGGIFIVILIGVLYPYVLAEEKAKSIDENLPYAFAFISALSSANIPVVEIFTSLSKEDIYGGMSKEAKEIVKDTKVFNYDIITTFLRRARITPSKKLSSVYYNIVASLIVGAEMKNIFHEIYERLMEDRKLELFEAIEKVEILSEFYVIACGMIPLFVVMTVPVASSISAILQTASLFGDPKLLPLTFYLWVPIASIIFMGLVYGILPKDFKLNVSLLDVLKEFDEPEIEGIKMKFKWKPVHFITLFFWMLSIISFMLFFIRKSIFKFHGTDFLMFGILFLILPFILTSYWHFIIENQKERYYPIFLNDLTMAVRSGMDIIRAMQVCARTNYGPLTKIVKKMAIQMSWGRPVNEVFADLERTEKSLIAKRIASILKECAVSGGDVKDILTSVTVHAYKLSEMKREISARQFIYVVVIYLSFFLYIGTSYIMVHSLLPTLLKNIHGLSVEFYKNYLFQGILIYSIFSGASLGILTERSIIAGIKHILLMLIVGYMLFKFYIGG.

9 helical membrane passes run 64-84, 86-106, 239-259, 281-301, 334-354, 368-388, 504-524, 547-567, and 571-591; these read VVFL…LIVF, IFYA…IGVL, FYVI…PVAS, FYLW…GILP, VHFI…LFFI, MFGI…HFII, FIYV…SYIM, YLFQ…GILT, and IIAG…LFKF.

The protein to M.jannaschii FlaJ.

It is found in the cell membrane. This is an uncharacterized protein from Methanocaldococcus jannaschii (strain ATCC 43067 / DSM 2661 / JAL-1 / JCM 10045 / NBRC 100440) (Methanococcus jannaschii).